The following is a 117-amino-acid chain: Small ribosomal subunit protein uS17 (117 aa).

It belongs to the universal ribosomal protein uS17 family. In terms of assembly, part of the 30S ribosomal subunit.

In terms of biological role, one of the primary rRNA binding proteins, it binds specifically to the 5'-end of 16S ribosomal RNA. In Methanocaldococcus jannaschii (strain ATCC 43067 / DSM 2661 / JAL-1 / JCM 10045 / NBRC 100440) (Methanococcus jannaschii), this protein is Small ribosomal subunit protein uS17.